Consider the following 379-residue polypeptide: L-lactate dehydrogenase (379 aa).

The region spanning 1–379 (MIISSSTDYR…ITSELLVREP (379 aa)) is the FMN hydroxy acid dehydrogenase domain. Tyr24 provides a ligand contact to substrate. FMN is bound by residues Ser106 and Gln127. A substrate-binding site is contributed by Tyr129. FMN is bound at residue Thr155. Residue Arg164 coordinates substrate. Residue Lys251 participates in FMN binding. His275 functions as the Proton acceptor in the catalytic mechanism. Arg278 contributes to the substrate binding site. 306–330 (DSGIRSGLDVVRMIALGADAAMLGR) is an FMN binding site.

The protein belongs to the FMN-dependent alpha-hydroxy acid dehydrogenase family. FMN serves as cofactor.

The protein localises to the cell membrane. The enzyme catalyses (S)-lactate + A = pyruvate + AH2. In terms of biological role, catalyzes the conversion of L-lactate to pyruvate. Is coupled to the respiratory chain. The chain is L-lactate dehydrogenase from Alcaligenes faecalis.